The chain runs to 321 residues: Glucokinase (321 aa).

Gly-8–Thr-13 is a binding site for ATP.

Belongs to the bacterial glucokinase family.

The protein localises to the cytoplasm. The enzyme catalyses D-glucose + ATP = D-glucose 6-phosphate + ADP + H(+). In Enterobacter sp. (strain 638), this protein is Glucokinase.